The chain runs to 366 residues: Eukaryotic translation initiation factor 3 subunit H (366 aa).

Residues 12-161 form the MPN domain; sequence VKVEALVVMK…LRAFRLSPKF (150 aa).

The protein belongs to the eIF-3 subunit H family. As to quaternary structure, component of the eukaryotic translation initiation factor 3 (eIF-3) complex.

Its subcellular location is the cytoplasm. Component of the eukaryotic translation initiation factor 3 (eIF-3) complex, which is involved in protein synthesis of a specialized repertoire of mRNAs and, together with other initiation factors, stimulates binding of mRNA and methionyl-tRNAi to the 40S ribosome. The eIF-3 complex specifically targets and initiates translation of a subset of mRNAs involved in cell proliferation. This chain is Eukaryotic translation initiation factor 3 subunit H, found in Emericella nidulans (strain FGSC A4 / ATCC 38163 / CBS 112.46 / NRRL 194 / M139) (Aspergillus nidulans).